Reading from the N-terminus, the 495-residue chain is Glycerol kinase (495 aa).

An ADP-binding site is contributed by T11. The ATP site is built by T11, T12, and S13. A sn-glycerol 3-phosphate-binding site is contributed by T11. Residue R15 participates in ADP binding. Residues R81, E82, Y133, and D242 each coordinate sn-glycerol 3-phosphate. Residues R81, E82, Y133, D242, and Q243 each contribute to the glycerol site. ADP is bound by residues T264 and G307. ATP contacts are provided by T264, G307, Q311, and G409. G409 and N413 together coordinate ADP.

It belongs to the FGGY kinase family.

It carries out the reaction glycerol + ATP = sn-glycerol 3-phosphate + ADP + H(+). It functions in the pathway polyol metabolism; glycerol degradation via glycerol kinase pathway; sn-glycerol 3-phosphate from glycerol: step 1/1. With respect to regulation, inhibited by fructose 1,6-bisphosphate (FBP). In terms of biological role, key enzyme in the regulation of glycerol uptake and metabolism. Catalyzes the phosphorylation of glycerol to yield sn-glycerol 3-phosphate. In Borrelia hermsii (strain HS1 / DAH), this protein is Glycerol kinase.